A 677-amino-acid chain; its full sequence is DNA ligase (677 aa).

Residues 35–39, 84–85, and glutamate 116 contribute to the NAD(+) site; these read DAEYD and SL. Residue lysine 118 is the N6-AMP-lysine intermediate of the active site. NAD(+) contacts are provided by arginine 139, glutamate 176, lysine 295, and lysine 319. Zn(2+)-binding residues include cysteine 413, cysteine 416, cysteine 431, and cysteine 437. Residues 596 to 677 enclose the BRCT domain; that stretch reads LDELPLAGQV…MLAMFADLEG (82 aa).

This sequence belongs to the NAD-dependent DNA ligase family. LigA subfamily. Mg(2+) is required as a cofactor. Requires Mn(2+) as cofactor.

The enzyme catalyses NAD(+) + (deoxyribonucleotide)n-3'-hydroxyl + 5'-phospho-(deoxyribonucleotide)m = (deoxyribonucleotide)n+m + AMP + beta-nicotinamide D-nucleotide.. DNA ligase that catalyzes the formation of phosphodiester linkages between 5'-phosphoryl and 3'-hydroxyl groups in double-stranded DNA using NAD as a coenzyme and as the energy source for the reaction. It is essential for DNA replication and repair of damaged DNA. This is DNA ligase from Pseudoalteromonas atlantica (strain T6c / ATCC BAA-1087).